The chain runs to 387 residues: Mitogen-activated protein kinase homolog MMK1 (387 aa).

Residues 55–340 form the Protein kinase domain; the sequence is KPPIMPIGKG…VEDALAHPYL (286 aa). ATP is bound by residues 61 to 69 and lysine 84; that span reads IGKGAYGIV. The Proton acceptor role is filled by aspartate 181. A Phosphothreonine modification is found at threonine 213. The short motif at 213 to 215 is the TXY element; it reads TEY. Position 215 is a phosphotyrosine (tyrosine 215).

This sequence belongs to the protein kinase superfamily. CMGC Ser/Thr protein kinase family. MAP kinase subfamily. It depends on Mg(2+) as a cofactor. Post-translationally, dually phosphorylated on Thr-213 and Tyr-215, which activates the enzyme. Autophosphorylated. In terms of tissue distribution, roots and stems.

The catalysed reaction is L-seryl-[protein] + ATP = O-phospho-L-seryl-[protein] + ADP + H(+). It catalyses the reaction L-threonyl-[protein] + ATP = O-phospho-L-threonyl-[protein] + ADP + H(+). Activated by tyrosine and threonine phosphorylation. May play a role in the mitogenic induction of symbiotic root nodules on Alfalfa by Rhizobium signal molecules. In Medicago sativa (Alfalfa), this protein is Mitogen-activated protein kinase homolog MMK1 (MMK1).